The chain runs to 393 residues: Short-chain dehydrogenase/reductase family 42E member 1 (393 aa).

Residue Tyr152 is the Proton acceptor of the active site. Lys156 is an NAD(+) binding site. 2 helical membrane-spanning segments follow: residues 282 to 302 (LPLTLIYCFAFLTEMTHFILG) and 371 to 391 (GLVILLVVTVVLVWLLPSVIL).

This sequence belongs to the 3-beta-HSD family.

Its subcellular location is the membrane. The polypeptide is Short-chain dehydrogenase/reductase family 42E member 1 (SDR42E1) (Bos taurus (Bovine)).